Here is a 148-residue protein sequence, read N- to C-terminus: Calcium-permeable cation-selective channel WeiTsing (148 aa).

At 1 to 25 (METVSAVNQTLPISGGEPVKFTTYS) the chain is on the cytoplasmic side. The chain crosses the membrane as a helical span at residues 26 to 46 (AAVHKVLVMINAGILGLLQLV). At 47-51 (SQQSS) the chain is on the lumenal side. Residues 52-72 (VLETHKAAFLCFCVFILFYAV) traverse the membrane as a helical segment. The Cytoplasmic segment spans residues 73–90 (LRVREAMDVRLQPGLVPR). The helical transmembrane segment at 91–110 (LIGHGSHLFGGLAALVLVSV) threads the bilayer. Topologically, residues 111-116 (VSTAFS) are lumenal. A helical transmembrane segment spans residues 117–133 (IVLFLLWFIWLSAVVYL). The Cytoplasmic portion of the chain corresponds to 134–148 (ETNKPSACPPQLPPV).

In terms of assembly, forms pentamers with a central pore to produce an ion channel.

It is found in the endoplasmic reticulum membrane. It carries out the reaction Ca(2+)(in) = Ca(2+)(out). The catalysed reaction is Na(+)(in) = Na(+)(out). Functionally, calcium-permeable cation-selective channel conferring a broad-spectrum clubroot resistance by supporting cytosolic Ca(2+) increase in root pericycle cells. Triggers immunity toward fungal pathogens such as Plasmodiophora brassicae (Pb) and induces defenses. Also permeable to sodium ion Na(+) and possibly other cations. This Arabidopsis thaliana (Mouse-ear cress) protein is Calcium-permeable cation-selective channel WeiTsing.